We begin with the raw amino-acid sequence, 1483 residues long: MIVRSLLLAGSLLLASVVPAAHAKSDGPEIKVKEFDKVPTNPYYFEDTDTVMLSGHMAELFISTDAASTWEPLKDKDGLLFPNRYHSQSAVIYGPNRKHWATFDAAKTWREFEVPEKLIFSNEGPRPFTFHGKDPNKVIINAEECLISLCRRVTYYTTDGFKTIKKLLKNDMGCYWAVGTPVFAEGQKDLPEKLDDRIFCIWAHITPFDRTRRLIYSDTYFSDDKFRAVEIGGREIKGVNNIALIKKYLVLAASSEGTSEAAIYVSKDAVNWGRAEFYGGPKIRGGSFTVLESTNYSIQVNAASRRSRRPIGSLFTSDSAGTSFTMNVDGVNEDEKMYTDFEQVSGIQGIFLINLVDNAADVKSGQSSEKKIVSRISFDDGRTFKPLKCGDKDLHLHSITRPSNMGRIFSSPAPGLIMGVGNTGDKLKEYENGNLYVSNDAGVTWRKALDKSHKYEFGDQGSLLVAIADDGKDELLTDEISYSLNHGKDWKKAKLPHKAAAIWLTTTPDSTSLQFLLIAQGKGKSYAMSIDFSNVHERKCEEKDFERWPARLDEKGEPDCLMGHKQFYRRRKADADCFVKEKFKEPVPETEACKCTKEDFECSAGFRRNKDYDCEPDGKLKPADGKCKNPDDKFMGPSGYRMIPGDDCIKKGGVDLEKEVERPCKDVTKAPASGQIAVEKTTFETKNLNYRYLERSDTSSGDDETVILRTDDGNLFVTRDHGKTWQRGKFQEPILQYIPHKYDHDVVYLLTQGKKAYWSIDRAHSFHSFEGKLPVTRTKGTLPLFFHPDHPDWLIWIGGENCNGQKCTDLAYYSKNRGDEWDLLLRGVGKCMFAGKKDELTADDLIFCSQHEHEDPRKNLRLVSSVDQFAKTTSIHFDGKPIVGYAKMSEFIVAATKNGTELQSFTSVDGKTFAHAAFPPNYHVGAEYAYTVLDSSTHSIFLHVTDHSAQNNEFGSILKSNSNGTSYVMSLRDANRNKADYVDFEKIQVVEGVAMANIVANADEVRHKGQDKKFRSMISHNDASEWALMPPPKKDVEGHSFDCKVKDKGTEECALHIHGYTERRDSRDSMSSGSAVGLIIGVGNVGPYLTTRAESDTFMSRDAGITWHQVRKGRYQWEFGDQGSIVVIVAEEKPTKVLSYSLDEGETWTDFEFTDKEVKVEDISTVPSDTSRNFLLWARGGSPGELIAYNVDFTGLKEREKQCVLKKESPEADDYYLWSPKHPQQKSNCLFGHVSVYHRKRPEAKCYNGPKLDRLSSEKKNCECTRQDYECDYNYERQSDGSCALVKGLQPADPMKICKDDPEAVEYFEPTGYRKLPVSTCEGGHQLDHIVARPCPNKKKEFEKKHPGIGGFGIFLAIFFPVTAATAIGYWAFSKWDGKFGRIRLGESQPESLFAGNSPLITIPVAIVAGTVAVITALPLLFSSLWRSFKGYTRLSNPWGQRQRPYASRDAFAARRGEYVGVVDDEDELLGAEEFEGDDDEEV.

The first 23 residues, 1-23 (MIVRSLLLAGSLLLASVVPAAHA), serve as a signal peptide directing secretion. Residues 24-1347 (KSDGPEIKVK…KKKEFEKKHP (1324 aa)) are Lumenal-facing. Residue asparagine 295 is glycosylated (N-linked (GlcNAc...) asparagine). BNR repeat units lie at residues 376-385 (ISFDDGRTFK), 436-446 (YVSNDAGVTWR), 482-492 (YSLNHGKDWKK), and 716-726 (FVTRDHGKTWQ). N-linked (GlcNAc...) asparagine glycans are attached at residues asparagine 898 and asparagine 963. BNR repeat units follow at residues 1098-1108 (FMSRDAGITWH) and 1140-1149 (YSLDEGETWT). The chain crosses the membrane as a helical span at residues 1348–1368 (GIGGFGIFLAIFFPVTAATAI). The Cytoplasmic portion of the chain corresponds to 1369-1399 (GYWAFSKWDGKFGRIRLGESQPESLFAGNSP). A helical transmembrane segment spans residues 1400–1420 (LITIPVAIVAGTVAVITALPL). The Lumenal segment spans residues 1421–1483 (LFSSLWRSFK…EFEGDDDEEV (63 aa)).

Belongs to the VPS10-related sortilin family.

Its subcellular location is the golgi apparatus. It localises to the trans-Golgi network membrane. The protein resides in the prevacuolar compartment membrane. Functions as a sorting receptor in the Golgi compartment required for the intracellular sorting and delivery of soluble vacuolar proteins, like carboxypeptidase Y (CPY) and proteinase A. Executes multiple rounds of sorting by cycling between the late Golgi and a prevacuolar endosome-like compartment. This is Vacuolar protein sorting/targeting protein 10 (VPS10) from Arthroderma gypseum (strain ATCC MYA-4604 / CBS 118893) (Microsporum gypseum).